The sequence spans 290 residues: Alpha-1,2-colitosyltransferase (290 aa).

This sequence belongs to the glycosyltransferase 11 family. Does not require a metal cofactor. is required as a cofactor.

The enzyme catalyses GDP-beta-L-colitose + beta-D-galactosyl-(1-&gt;3)-N-acetyl-D-glucosamine = alpha-L-colitosyl-(1-&gt;2)-beta-D-galactosyl-(1-&gt;3)-N-acetyl-D-glucosamine + GDP + H(+). Its pathway is bacterial outer membrane biogenesis; LPS O-antigen biosynthesis. Its activity is regulated as follows. Addition of metal ions dramatically decreases the activity to 0-40%. In terms of biological role, involved in the biosynthesis of the lipopolysaccharide (LPS) O-antigen region. Catalyzes the transfer of colitose from GDP-colitose to the galactose residue of beta-Gal-(1-&gt;3)-GlcNAc (lacto-N-biose) via an alpha1,2-linkage. Is specific for beta-Gal-(1-&gt;3)-GlcNAc, but can use GDP-L-fucose as the sugar donor with almost the same efficiency as GDP-L-colitose. The protein is Alpha-1,2-colitosyltransferase of Escherichia coli.